A 327-amino-acid polypeptide reads, in one-letter code: Acetaldehyde dehydrogenase 5 (327 aa).

15–18 contributes to the NAD(+) binding site; the sequence is SGNI. Cys-133 functions as the Acyl-thioester intermediate in the catalytic mechanism. NAD(+) contacts are provided by residues 164–172 and Asn-297; that span reads SAGPGTRAN.

It belongs to the acetaldehyde dehydrogenase family.

It carries out the reaction acetaldehyde + NAD(+) + CoA = acetyl-CoA + NADH + H(+). In Rhodococcus jostii (strain RHA1), this protein is Acetaldehyde dehydrogenase 5.